The following is a 759-amino-acid chain: 5-methyltetrahydropteroyltriglutamate--homocysteine methyltransferase (759 aa).

Residues 1–16 are compositionally biased toward polar residues; that stretch reads MTQPVRRQPFTATITG. The disordered stretch occupies residues 1–22; it reads MTQPVRRQPFTATITGSPRIGP. Residues 24–27 and K118 contribute to the 5-methyltetrahydropteroyltri-L-glutamate site; that span reads RELK. L-homocysteine contacts are provided by residues 437–439 and E490; that span reads IGS. L-methionine is bound by residues 437–439 and E490; that span reads IGS. 5-methyltetrahydropteroyltri-L-glutamate-binding positions include 521 to 522 and W567; that span reads RC. Residue D605 coordinates L-homocysteine. D605 lines the L-methionine pocket. Residue E611 participates in 5-methyltetrahydropteroyltri-L-glutamate binding. 3 residues coordinate Zn(2+): H647, C649, and E671. The Proton donor role is filled by H700. C732 is a Zn(2+) binding site.

Belongs to the vitamin-B12 independent methionine synthase family. Requires Zn(2+) as cofactor.

It carries out the reaction 5-methyltetrahydropteroyltri-L-glutamate + L-homocysteine = tetrahydropteroyltri-L-glutamate + L-methionine. The protein operates within amino-acid biosynthesis; L-methionine biosynthesis via de novo pathway; L-methionine from L-homocysteine (MetE route): step 1/1. Functionally, catalyzes the transfer of a methyl group from 5-methyltetrahydrofolate to homocysteine resulting in methionine formation. The protein is 5-methyltetrahydropteroyltriglutamate--homocysteine methyltransferase of Mycobacterium tuberculosis (strain ATCC 25177 / H37Ra).